Here is a 372-residue protein sequence, read N- to C-terminus: Flagellar P-ring protein (372 aa).

A signal peptide spans 1-26 (MNLSSLSFRLLATLLGACVVVAPASA).

It belongs to the FlgI family. As to quaternary structure, the basal body constitutes a major portion of the flagellar organelle and consists of four rings (L,P,S, and M) mounted on a central rod.

The protein localises to the periplasm. It is found in the bacterial flagellum basal body. Its function is as follows. Assembles around the rod to form the L-ring and probably protects the motor/basal body from shearing forces during rotation. In Xanthomonas oryzae pv. oryzae (strain MAFF 311018), this protein is Flagellar P-ring protein.